A 383-amino-acid polypeptide reads, in one-letter code: 4-hydroxy-3-methylbut-2-en-1-yl diphosphate synthase (flavodoxin) (383 aa).

4 residues coordinate [4Fe-4S] cluster: Cys-277, Cys-280, Cys-312, and Glu-319.

This sequence belongs to the IspG family. [4Fe-4S] cluster serves as cofactor.

The enzyme catalyses (2E)-4-hydroxy-3-methylbut-2-enyl diphosphate + oxidized [flavodoxin] + H2O + 2 H(+) = 2-C-methyl-D-erythritol 2,4-cyclic diphosphate + reduced [flavodoxin]. It participates in isoprenoid biosynthesis; isopentenyl diphosphate biosynthesis via DXP pathway; isopentenyl diphosphate from 1-deoxy-D-xylulose 5-phosphate: step 5/6. Converts 2C-methyl-D-erythritol 2,4-cyclodiphosphate (ME-2,4cPP) into 1-hydroxy-2-methyl-2-(E)-butenyl 4-diphosphate. In Caulobacter vibrioides (strain ATCC 19089 / CIP 103742 / CB 15) (Caulobacter crescentus), this protein is 4-hydroxy-3-methylbut-2-en-1-yl diphosphate synthase (flavodoxin).